Consider the following 89-residue polypeptide: UPF0223 protein BCG9842_B1176 (89 aa).

The protein belongs to the UPF0223 family.

The protein is UPF0223 protein BCG9842_B1176 of Bacillus cereus (strain G9842).